Reading from the N-terminus, the 739-residue chain is Exocyst complex component 3-like protein (739 aa).

Residues 1–370 are mediates interaction with EXOC2, EXOC4 and EXOC5; the sequence is MDSAARDKTQ…DVSDLEPLLT (370 aa).

It belongs to the SEC6 family. Interacts with EXOC2, EXOC4 and EXOC5; may be part of the exocyst.

It localises to the cytoplasmic vesicle. Its subcellular location is the secretory vesicle. As part of the exocyst, may play a role in regulated exocytosis of insulin granules. This chain is Exocyst complex component 3-like protein (EXOC3L1), found in Bos taurus (Bovine).